Consider the following 415-residue polypeptide: Maintenance of mitochondrial morphology protein 1 (415 aa).

Over 1–18 the chain is Lumenal; it reads MADICPSRSEPTLSFTQG. Residues 19–39 traverse the membrane as a helical segment; it reads LILGQLSVVLLLAAFIKFFIF. Residues 40–415 lie on the Cytoplasmic side of the membrane; that stretch reads GDPPSPEVVA…MPGSMPGSMP (376 aa). The 217-residue stretch at 114–330 folds into the SMP-LTD domain; that stretch reads QPESLDWFNV…EPRFQEIALP (217 aa). Basic and acidic residues predominate over residues 373–389; it reads IEAEAHGGADRVPDSLR. Positions 373 to 415 are disordered; that stretch reads IEAEAHGGADRVPDSLRYRHRPRADEEFPGAGSMPGSMPGSMP. Over residues 404–415 the composition is skewed to low complexity; that stretch reads GSMPGSMPGSMP.

The protein belongs to the MMM1 family. In terms of assembly, homodimer. Component of the ER-mitochondria encounter structure (ERMES) or MDM complex, composed of mmm-1, mdm10, mdm12 and mdm34. A mmm-1 homodimer associates with one molecule of mdm12 on each side in a pairwise head-to-tail manner, and the SMP-LTD domains of mmm-1 and mdm12 generate a continuous hydrophobic tunnel for phospholipid trafficking.

The protein localises to the endoplasmic reticulum membrane. Functionally, component of the ERMES/MDM complex, which serves as a molecular tether to connect the endoplasmic reticulum (ER) and mitochondria. Components of this complex are involved in the control of mitochondrial shape and protein biogenesis, and function in nonvesicular lipid trafficking between the ER and mitochondria. The mdm12-mmm-1 subcomplex functions in the major beta-barrel assembly pathway that is responsible for biogenesis of all outer membrane beta-barrel proteins, and acts in a late step after the SAM complex. The mdm10-mdm12-mmm-1 subcomplex further acts in the TOM40-specific pathway after the action of the mdm12-mmm-1 complex. Essential for establishing and maintaining the structure of mitochondria and maintenance of mtDNA nucleoids. This Neurospora crassa (strain ATCC 24698 / 74-OR23-1A / CBS 708.71 / DSM 1257 / FGSC 987) protein is Maintenance of mitochondrial morphology protein 1 (mmm-1).